We begin with the raw amino-acid sequence, 368 residues long: Endophilin-A2 (368 aa).

Residues 1-21 (MSVAGLKKQFYKASQLVSEKV) are membrane-binding amphipathic helix. The BAR domain maps to 18–249 (SEKVGGAEGT…LKRRMREASS (232 aa)). The tract at residues 60 to 87 (PNPASRAKLTMLNTVSKIRGQVKNPGYP) is required for dimerization upon membrane association. Residues 145 to 250 (NLCEKDLKEI…KRRMREASSR (106 aa)) are a coiled coil. The interaction with ARC stretch occupies residues 218–254 (LVDAQLDYHRQAVQILDELAEKLKRRMREASSRPKRE). The segment at 244-308 (MREASSRPKR…PSRSMPPLDQ (65 aa)) is disordered. Positions 245 to 263 (REASSRPKREYKPKPREPF) are enriched in basic and acidic residues. Phosphoserine occurs at positions 288 and 292. The residue at position 298 (T298) is a Phosphothreonine. In terms of domain architecture, SH3 spans 306 to 365 (LDQPSCKALYDFEPENDGELGFHEGDVITLTNQIDENWYEGMLDGQSGFFPLSYVEVLVP). Y315 bears the Phosphotyrosine mark.

Belongs to the endophilin family. In terms of assembly, interacts with ARC. Interacts with SYNJ1 and DNM1. Interacts with PDCD6IP. Interacts with BIN2. Ubiquitous. Higher expression in pancreas, placenta, prostate, testis and uterus.

Its subcellular location is the cytoplasm. It is found in the early endosome membrane. The protein localises to the cell projection. It localises to the podosome. In terms of biological role, implicated in endocytosis. May recruit other proteins to membranes with high curvature. The chain is Endophilin-A2 (SH3GL1) from Homo sapiens (Human).